Reading from the N-terminus, the 500-residue chain is MKVSLSFLLTILIVIITIKVNLSQEIKISPFFANNLKFEPIPDYIEYDSDSDAGEALFLSNYLDDHKTAKQKSCVDIGAPFQSCDKLLEIDSNLRDTEDFFTFTGFITVNETYNSNTFFWFLESQNGDKNSPLVIFLQGGPGGASTFSLFVETGPYELLDNFTLVQREITWNSEFAMLYIDNPVGTGFSFTDSQEGYSNNEDEIATNLYTFLQQFYKLYPEYYTNELYITGESYAGKYIPAFSYHIIQQNQNSNNPNINLKGIAIGDGLCDPITQVTQYANLAFYTGLADLQQQEVMFEYQDKIVEAINQEQWSVANDLFTDLINGPPDYFQNITGESDYYDIRKTVEPTYGGDFTAFLNQSSIRAMIHVGNNYFQNNNDVYIHLEQDIPKSVKQLFPTILDNIKVILYNGQFDFIVGPSLTETMIRTIEWEGIQPFLESPKIIWKIPSDNVDVAGFVRQWNSFTQVVVRQAGHMVPLDQPARAFDMIDRFINNEPFPSG.

The first 23 residues, 1–23 (MKVSLSFLLTILIVIITIKVNLS), serve as a signal peptide directing secretion. 2 N-linked (GlcNAc...) asparagine glycosylation sites follow: Asn110 and Asn161. Ser233 is an active-site residue. 2 N-linked (GlcNAc...) asparagine glycosylation sites follow: Asn333 and Asn360. Catalysis depends on residues Asp414 and His474.

It belongs to the peptidase S10 family.

Its subcellular location is the secreted. May be involved in the digestion of phagocytosed particles in the lysosome, participation in an inflammatory protease cascade, and trimming of peptides for antigen presentation. The sequence is that of Probable serine carboxypeptidase CPVL (cpvl) from Dictyostelium discoideum (Social amoeba).